The chain runs to 415 residues: Interleukin-5 receptor subunit alpha (415 aa).

An N-terminal signal peptide occupies residues 1 to 17 (MVPVLLILVGALATLQA). Topologically, residues 18 to 339 (DLLNHKKFLL…KERKSLVEWH (322 aa)) are extracellular. Residues 29–120 (PPVNFTIKAT…VSAELKAPPG (92 aa)) enclose the Fibronectin type-III 1 domain. 2 N-linked (GlcNAc...) asparagine glycosylation sites follow: asparagine 32 and asparagine 128. Cystine bridges form between cysteine 131/cysteine 152 and cysteine 179/cysteine 193. 2 N-linked (GlcNAc...) asparagine glycosylation sites follow: asparagine 213 and asparagine 241. The 94-residue stretch at 238-331 (PPRNVTVEIE…WSQPIYVGKE (94 aa)) folds into the Fibronectin type-III 2 domain. Cysteines 266 and 313 form a disulfide. Positions 319–323 (WGEWS) match the WSXWS motif motif. Residues 340–361 (LIVLPTAACFVLLIFSLICRVC) form a helical membrane-spanning segment. The Cytoplasmic segment spans residues 362–415 (HLWTRLFPPVPAPKSNIKDLPVVTEYEKPSNETKIEVVHCVEEVGFEVMGNSTF). The short motif at 367-375 (LFPPVPAPK) is the Box 1 motif element.

Interacts with IL5. Interacts with CSF2RB. Interacts with JAK2. Interacts with SDCBP. As to expression, expressed on eosinophils and basophils. Also on B-cells.

The protein resides in the membrane. In terms of biological role, cell surface receptor that plays an important role in the survival, differentiation, and chemotaxis of eosinophils. Acts by forming a heterodimeric receptor with CSF2RB subunit and subsequently binding to interleukin-5. In unstimulated conditions, interacts constitutively with JAK2. Heterodimeric receptor activation leads to JAK2 stimulation and subsequent activation of the JAK-STAT pathway. This Mus musculus (Mouse) protein is Interleukin-5 receptor subunit alpha (Il5ra).